We begin with the raw amino-acid sequence, 133 residues long: Ribosome-binding factor A (133 aa).

The protein belongs to the RbfA family. Monomer. Binds 30S ribosomal subunits, but not 50S ribosomal subunits or 70S ribosomes.

It localises to the cytoplasm. One of several proteins that assist in the late maturation steps of the functional core of the 30S ribosomal subunit. Associates with free 30S ribosomal subunits (but not with 30S subunits that are part of 70S ribosomes or polysomes). Required for efficient processing of 16S rRNA. May interact with the 5'-terminal helix region of 16S rRNA. This chain is Ribosome-binding factor A, found in Yersinia enterocolitica.